We begin with the raw amino-acid sequence, 300 residues long: 33 kDa chaperonin (300 aa).

2 cysteine pairs are disulfide-bonded: Cys247–Cys249 and Cys280–Cys283.

The protein belongs to the HSP33 family. Post-translationally, under oxidizing conditions two disulfide bonds are formed involving the reactive cysteines. Under reducing conditions zinc is bound to the reactive cysteines and the protein is inactive.

Its subcellular location is the cytoplasm. In terms of biological role, redox regulated molecular chaperone. Protects both thermally unfolding and oxidatively damaged proteins from irreversible aggregation. Plays an important role in the bacterial defense system toward oxidative stress. This is 33 kDa chaperonin from Prochlorococcus marinus (strain MIT 9312).